The chain runs to 72 residues: ATP synthase subunit c (72 aa).

2 helical membrane-spanning segments follow: residues Leu-5–Ala-25 and Gly-52–Val-72.

It belongs to the ATPase C chain family. In terms of assembly, F-type ATPases have 2 components, F(1) - the catalytic core - and F(0) - the membrane proton channel. F(1) has five subunits: alpha(3), beta(3), gamma(1), delta(1), epsilon(1). F(0) has three main subunits: a(1), b(2) and c(10-14). The alpha and beta chains form an alternating ring which encloses part of the gamma chain. F(1) is attached to F(0) by a central stalk formed by the gamma and epsilon chains, while a peripheral stalk is formed by the delta and b chains.

Its subcellular location is the cell membrane. F(1)F(0) ATP synthase produces ATP from ADP in the presence of a proton or sodium gradient. F-type ATPases consist of two structural domains, F(1) containing the extramembraneous catalytic core and F(0) containing the membrane proton channel, linked together by a central stalk and a peripheral stalk. During catalysis, ATP synthesis in the catalytic domain of F(1) is coupled via a rotary mechanism of the central stalk subunits to proton translocation. Functionally, key component of the F(0) channel; it plays a direct role in translocation across the membrane. A homomeric c-ring of between 10-14 subunits forms the central stalk rotor element with the F(1) delta and epsilon subunits. This chain is ATP synthase subunit c, found in Clostridium perfringens (strain SM101 / Type A).